The primary structure comprises 139 residues: Thioredoxin H-type (139 aa).

The Thioredoxin domain maps to 20-132 (ELAGGNVHLI…LHKKITAILD (113 aa)). Active-site nucleophile residues include Cys58 and Cys61. Cys58 and Cys61 form a disulfide bridge.

It is found in the cytoplasm. Its function is as follows. Participates in various redox reactions through the reversible oxidation of the active center dithiol to a disulfide. The H form is known to activate a number of cytosolic enzymes. This Populus jackii (Balm of Gilead) protein is Thioredoxin H-type.